A 159-amino-acid polypeptide reads, in one-letter code: Phosphopantetheine adenylyltransferase (159 aa).

Thr8 contacts substrate. ATP contacts are provided by residues 8–9 (TF) and His16. 3 residues coordinate substrate: Lys40, Thr72, and Arg86. ATP contacts are provided by residues 87 to 89 (GLR), Glu97, and 122 to 128 (YSFLSSS).

Belongs to the bacterial CoaD family. As to quaternary structure, homohexamer. Requires Mg(2+) as cofactor.

It is found in the cytoplasm. The enzyme catalyses (R)-4'-phosphopantetheine + ATP + H(+) = 3'-dephospho-CoA + diphosphate. It functions in the pathway cofactor biosynthesis; coenzyme A biosynthesis; CoA from (R)-pantothenate: step 4/5. In terms of biological role, reversibly transfers an adenylyl group from ATP to 4'-phosphopantetheine, yielding dephospho-CoA (dPCoA) and pyrophosphate. The sequence is that of Phosphopantetheine adenylyltransferase from Prochlorococcus marinus subsp. pastoris (strain CCMP1986 / NIES-2087 / MED4).